The sequence spans 76 residues: ATP synthase subunit 9, mitochondrial (76 aa).

2 helical membrane passes run 14 to 34 and 52 to 72; these read MATLGLGGAAIGIALVFVALI and ILGFALAEACGLFCLMMSFLL.

The protein belongs to the ATPase C chain family. As to quaternary structure, F-type ATPases have 2 components, CF(1) - the catalytic core - and CF(0) - the membrane proton channel. CF(1) has five subunits: alpha(3), beta(3), gamma(1), delta(1), epsilon(1). CF(0) has three main subunits: a, b and c.

Its subcellular location is the mitochondrion membrane. In terms of biological role, mitochondrial membrane ATP synthase (F(1)F(0) ATP synthase or Complex V) produces ATP from ADP in the presence of a proton gradient across the membrane which is generated by electron transport complexes of the respiratory chain. F-type ATPases consist of two structural domains, F(1) - containing the extramembraneous catalytic core and F(0) - containing the membrane proton channel, linked together by a central stalk and a peripheral stalk. During catalysis, ATP synthesis in the catalytic domain of F(1) is coupled via a rotary mechanism of the central stalk subunits to proton translocation. Part of the complex F(0) domain. A homomeric c-ring of probably 10 subunits is part of the complex rotary element. The sequence is that of ATP synthase subunit 9, mitochondrial (ATP9) from Debaryomyces hansenii (strain ATCC 36239 / CBS 767 / BCRC 21394 / JCM 1990 / NBRC 0083 / IGC 2968) (Yeast).